Here is a 376-residue protein sequence, read N- to C-terminus: Chaperone protein DnaJ (376 aa).

A J domain is found at 5–70 (DYYEVLGVAK…QKRAAYDQYG (66 aa)). A CR-type zinc finger spans residues 136-214 (GYDTQIRVPS…CHGSGKVKET (79 aa)). Zn(2+) contacts are provided by cysteine 149, cysteine 152, cysteine 166, cysteine 169, cysteine 188, cysteine 191, cysteine 202, and cysteine 205. CXXCXGXG motif repeat units lie at residues 149–156 (CGVCHGSG), 166–173 (CPTCHGQG), 188–195 (CPKCHGTG), and 202–209 (CAHCHGSG).

Belongs to the DnaJ family. As to quaternary structure, homodimer. Zn(2+) serves as cofactor.

The protein localises to the cytoplasm. Participates actively in the response to hyperosmotic and heat shock by preventing the aggregation of stress-denatured proteins and by disaggregating proteins, also in an autonomous, DnaK-independent fashion. Unfolded proteins bind initially to DnaJ; upon interaction with the DnaJ-bound protein, DnaK hydrolyzes its bound ATP, resulting in the formation of a stable complex. GrpE releases ADP from DnaK; ATP binding to DnaK triggers the release of the substrate protein, thus completing the reaction cycle. Several rounds of ATP-dependent interactions between DnaJ, DnaK and GrpE are required for fully efficient folding. Also involved, together with DnaK and GrpE, in the DNA replication of plasmids through activation of initiation proteins. This chain is Chaperone protein DnaJ, found in Burkholderia mallei (strain NCTC 10229).